We begin with the raw amino-acid sequence, 2345 residues long: Nonribisomal peptide synthetase malG (2345 aa).

The interval 226 to 620 (FSEQAKKNPT…VGRMGTVVKV (395 aa)) is adenylation 1. One can recognise a Carrier 1 domain in the interval 766 to 839 (TENETLLRLL…EAAGTMISAG (74 aa)). The residue at position 800 (Ser800) is an O-(pantetheine 4'-phosphoryl)serine. Residues 877-1292 (EEIYPSTPLQ…LLCPSDKSKL (416 aa)) form a condensation 1 region. Residues 1317 to 1707 (VRSERTAVSA…GRKNREVKLR (391 aa)) are adenylation 2. The Carrier 2 domain occupies 1843 to 1926 (QPHESTALFV…DIARLIEGVK (84 aa)). O-(pantetheine 4'-phosphoryl)serine is present on Ser1885. The reductase (R) domain stretch occupies residues 1969–2256 (GMSVFLTGGT…PRQLNALQSE (288 aa)).

It belongs to the NRP synthetase family.

It catalyses the reaction L-proline + L-tryptophan + 2 ATP + NADPH = (S)-3-(indol-3-ylmethyl)-6,7,8,8a-tetrahydropyrrolo[1,2-a]pyrazin-1-one + 2 AMP + 2 diphosphate + NADP(+) + H2O + H(+). In terms of biological role, nonribisomal peptide synthetase; part of the gene cluster that mediates the biosynthesis of malbrancheamide, a dichlorinated fungal indole alkaloid that belongs to a family of natural products containing a characteristic bicyclo[2.2.2]diazaoctane core. The first step of malbrancheamide biosynthesis involves coupling of L-proline and L-tryptophan by malG, a bimodular NRPS, to produce L-Pro-L-Trp aldehyde through reductive offloading. This compound undergoes spontaneous cyclization and dehydration to give a dienamine which is reverse prenylated at C-2 by malE. The other prenyltransferase present in the cluster, malB, displays modest activity, suggesting that may be a redundant gene in the pathway. Subsequently, a [4+2] Diels-Alder cyclo-addition catalyzed by the bifunctional enzyme malC forms the characteristic bicyclo[2.2.2]diazaoctane ring of premalbrancheamid. Finally, the flavin-dependent halogenase malA catalyzes the iterative dichlorination of the indole ring of premalbrancheamide to yield C-9 monochlorinated malbrancheamide B, C-8 monochlorinated isomalbrancheamide B, and dichlorinated malbrancheamide. MalA is also able to brominate premalbrancheamide at C-9 to yield malbrancheamide C, and, to a lesser extend, at C-8 to yield isomalbrancheamide C. Finally, malA can brominate C-9 monochlorinated malbrancheamide B at C-8 to yield malbrancheamide D, or C-8 monochlorinated isomalbrancheamide B at C-9 to produce isomalbrancheamide D. This Malbranchea aurantiaca protein is Nonribisomal peptide synthetase malG.